A 569-amino-acid chain; its full sequence is CTP synthase (569 aa).

A Glutamine amidotransferase type-1 domain is found at 313 to 569; that stretch reads RIAMVGKYTG…NASLERLKKM (257 aa). Catalysis depends on Cys-410, which acts as the Nucleophile. Active-site residues include His-541 and Glu-543.

This sequence belongs to the CTP synthase family.

The enzyme catalyses UTP + L-glutamine + ATP + H2O = CTP + L-glutamate + ADP + phosphate + 2 H(+). Its pathway is pyrimidine metabolism; CTP biosynthesis via de novo pathway; CTP from UDP: step 2/2. In terms of biological role, catalyzes the ATP-dependent amination of UTP to CTP with either L-glutamine or ammonia as the source of nitrogen. The protein is CTP synthase (ctps) of Dictyostelium discoideum (Social amoeba).